We begin with the raw amino-acid sequence, 473 residues long: Photosystem II CP43 reaction center protein (473 aa).

Residues 1-14 constitute a propeptide that is removed on maturation; it reads MKTLYSPRRYYPVE. T15 carries the N-acetylthreonine modification. T15 carries the post-translational modification Phosphothreonine. The next 5 membrane-spanning stretches (helical) occupy residues 69 to 93, 134 to 155, 178 to 200, 255 to 275, and 291 to 312; these read LFEVAHFVPEKPMYEQGLILLPHLA, IIGPETLEESFPFFGYVWKDKN, KAVWFGGVYDTWAPGGGDVRVIT, KPFAWARRAFVWSGEAYLSYS, and WFNNTAYPSEFYGPTGPEASQA. Residue E367 participates in [CaMn4O5] cluster binding. The chain crosses the membrane as a helical span at residues 447-471; sequence RARAAAAGFEKGIERETEPVLFMSP.

This sequence belongs to the PsbB/PsbC family. PsbC subfamily. As to quaternary structure, PSII is composed of 1 copy each of membrane proteins PsbA, PsbB, PsbC, PsbD, PsbE, PsbF, PsbH, PsbI, PsbJ, PsbK, PsbL, PsbM, PsbT, PsbX, PsbY, PsbZ, Psb30/Ycf12, at least 3 peripheral proteins of the oxygen-evolving complex and a large number of cofactors. It forms dimeric complexes. It depends on Binds multiple chlorophylls and provides some of the ligands for the Ca-4Mn-5O cluster of the oxygen-evolving complex. It may also provide a ligand for a Cl- that is required for oxygen evolution. PSII binds additional chlorophylls, carotenoids and specific lipids. as a cofactor.

Its subcellular location is the plastid. The protein localises to the chloroplast thylakoid membrane. Functionally, one of the components of the core complex of photosystem II (PSII). It binds chlorophyll and helps catalyze the primary light-induced photochemical processes of PSII. PSII is a light-driven water:plastoquinone oxidoreductase, using light energy to abstract electrons from H(2)O, generating O(2) and a proton gradient subsequently used for ATP formation. This is Photosystem II CP43 reaction center protein from Chaetosphaeridium globosum (Charophycean green alga).